Reading from the N-terminus, the 404-residue chain is Glucose-1-phosphate adenylyltransferase (404 aa).

Residues Tyr-99, Gly-164, 179-180 (EK), and Ser-197 contribute to the alpha-D-glucose 1-phosphate site.

Belongs to the bacterial/plant glucose-1-phosphate adenylyltransferase family. As to quaternary structure, homotetramer.

It catalyses the reaction alpha-D-glucose 1-phosphate + ATP + H(+) = ADP-alpha-D-glucose + diphosphate. It participates in glycan biosynthesis; glycogen biosynthesis. Its function is as follows. Involved in the biosynthesis of ADP-glucose, a building block required for the elongation reactions to produce glycogen. Catalyzes the reaction between ATP and alpha-D-glucose 1-phosphate (G1P) to produce pyrophosphate and ADP-Glc. The protein is Glucose-1-phosphate adenylyltransferase of Rhodococcus jostii (strain RHA1).